Consider the following 806-residue polypeptide: MVTPRSAVPAARPLAARRLASVAWACAALLALVALQCATATKDIVTMHATRNSLIPKDTLTVAVVMIDSYDNRLVFHANKNLLFGASNTSARALAEAYNLLGEVYVTYAYYRWARDDRPVAVGRPAPDYVLGTRLLSGPGSQKIKPPEERPSFPLSGSLRGKSLLMPRKVIFNDPLQTLMPFVFTRYLSITLSGYWDISVNSGKNVFSLCVSSPATPPVEVIATPRSAKLRESRFPQWPRYLYVSSSETSVLVNVAAGTSYKPRLYNATLAGVKAFLEVQNYGSHVAAGQLLTIKQLLKHGCNREPDEPFVVAAALHFGAAWHRFAALAAETYVTDAEILEFVVTTETWAKQVELCFSANAPQLGAAPPASRLAILSGRGGADEGLINVPYAILQVSRERYWGEVRSVNEQLTILTAILGSVDRLGAAAYLPSADGVAPHAFAASIIDSYYHKLIRGSATDKIDRKTLSAAVRVFLARKADSIPTARRVLTHMTVLCSEHQAQNPLVDITGTIDAASGHGEIFCLDDLFTPCAAALRFDLEPQANRPSGNVISASAVYRTLYGSFLYGGSELETAALLDDSARVIAAAQPVGGPKAYADMFFPELARCFDWTRENSIVFYIAISDSASWILTTRPVTGGVRYRLPDTSIRTNLYLTYFNASCSKEPFASRVEKITSGYVNLHGASIACKLCGHALLRYSLGGFEDVFVIRTADEERQMTMGANSSIQYFRAMDPTYFNYILMDSSGSALRVLAFTHGSYAVDKNYIIGIAVGSLAGVFAVAFAARSIYKFYRGRANRYTLLTNDYD.

Positions 1–40 are cleaved as a signal peptide; it reads MVTPRSAVPAARPLAARRLASVAWACAALLALVALQCATA. At 41–764 the chain is on the virion surface side; it reads TKDIVTMHAT…THGSYAVDKN (724 aa). N-linked (GlcNAc...) asparagine; by host glycans are attached at residues Asn-88, Asn-267, Asn-659, and Asn-723. Residues 765–785 traverse the membrane as a helical segment; that stretch reads YIIGIAVGSLAGVFAVAFAAR. Residues 786–806 are Intravirion-facing; it reads SIYKFYRGRANRYTLLTNDYD.

It belongs to the herpesviridae glycoprotein H family. As to quaternary structure, interacts with glycoprotein L (gL); this interaction is necessary for the correct processing and cell surface expression of gH. The heterodimer gH/gL seems to interact with gB trimers during fusion. N-glycosylated, O-glycosylated, and sialylated.

The protein localises to the virion membrane. The protein resides in the host cell membrane. Its subcellular location is the host endosome membrane. The heterodimer glycoprotein H-glycoprotein L is required for the fusion of viral and plasma membranes leading to virus entry into the host cell. Following initial binding to host receptor, membrane fusion is mediated by the fusion machinery composed of gB and the heterodimer gH/gL. May also be involved in the fusion between the virion envelope and the outer nuclear membrane during virion morphogenesis. The sequence is that of Envelope glycoprotein H from Amazona oratrix (yellow-headed parrot).